The sequence spans 2070 residues: Multiple PDZ domain protein (2070 aa).

Residues methionine 1–asparagine 63 form the L27 domain. Residues valine 137 to serine 224 enclose the PDZ 1 domain. Position 230 is a phosphoserine (serine 230). PDZ domains follow at residues threonine 257–alanine 337 and aspartate 377–glycine 463. Serine 483 is subject to Phosphoserine. PDZ domains follow at residues valine 553 to threonine 634 and histidine 700 to proline 786. 2 positions are modified to phosphoserine: serine 790 and serine 1078. A PDZ 6 domain is found at threonine 1008–valine 1089. The interval aspartate 1121 to asparagine 1140 is disordered. Residues arginine 1151 to isoleucine 1243 form the PDZ 7 domain. Arginine 1170 is modified (omega-N-methylarginine). The tract at residues alanine 1278–valine 1324 is disordered. A compositionally biased stretch (polar residues) spans aspartate 1311–serine 1321. 2 PDZ domains span residues methionine 1350–lysine 1433 and histidine 1483–asparagine 1564. The disordered stretch occupies residues serine 1567–isoleucine 1612. Over residues serine 1584–proline 1610 the composition is skewed to polar residues. PDZ domains are found at residues threonine 1629 to glutamate 1712 and threonine 1725 to lysine 1807. Serine 1818 and serine 1824 each carry phosphoserine. PDZ domains are found at residues threonine 1862–glycine 1948 and serine 1987–serine 2070.

In terms of assembly, interacts with CLDN5, DLG4, GRIN1, F11R/JAM, CLDN1, NG2, CRB1, MPP4 and PALS1. Interacts with HTR2A, HTR2B, HTR2C, PLEKHA1/TAPP1, PLEKHA2/TAPP2, CXADR, SYNGAP1, CAMK2A and CAMK2B. Interacts with FAT4 (via cytoplasmic domain). Interacts with DLL1. (Microbial infection) Interacts with human adenovirus type 9 E4-ORF1 protein. As to quaternary structure, (Microbial infection) Interacts with human papillomavirus 18/HPV18 protein E6. In terms of tissue distribution, expressed in heart, brain, placenta, liver, skeletal muscle, kidney and pancreas.

It localises to the cell membrane. Its subcellular location is the apical cell membrane. The protein localises to the postsynaptic density. It is found in the cell projection. The protein resides in the dendrite. It localises to the cell junction. Its subcellular location is the tight junction. The protein localises to the synapse. It is found in the synaptosome. Member of the NMDAR signaling complex that may play a role in control of AMPAR potentiation and synaptic plasticity in excitatory synapses. Promotes clustering of HT2RC at the cell surface. The sequence is that of Multiple PDZ domain protein (MPDZ) from Homo sapiens (Human).